A 113-amino-acid chain; its full sequence is Large ribosomal subunit protein eL31A (113 aa).

This sequence belongs to the eukaryotic ribosomal protein eL31 family. In terms of assembly, component of the large ribosomal subunit (LSU). Mature yeast ribosomes consist of a small (40S) and a large (60S) subunit. The 40S small subunit contains 1 molecule of ribosomal RNA (18S rRNA) and 33 different proteins (encoded by 57 genes). The large 60S subunit contains 3 rRNA molecules (25S, 5.8S and 5S rRNA) and 46 different proteins (encoded by 81 genes).

The protein resides in the cytoplasm. Functionally, component of the ribosome, a large ribonucleoprotein complex responsible for the synthesis of proteins in the cell. The small ribosomal subunit (SSU) binds messenger RNAs (mRNAs) and translates the encoded message by selecting cognate aminoacyl-transfer RNA (tRNA) molecules. The large subunit (LSU) contains the ribosomal catalytic site termed the peptidyl transferase center (PTC), which catalyzes the formation of peptide bonds, thereby polymerizing the amino acids delivered by tRNAs into a polypeptide chain. The nascent polypeptides leave the ribosome through a tunnel in the LSU and interact with protein factors that function in enzymatic processing, targeting, and the membrane insertion of nascent chains at the exit of the ribosomal tunnel. In Saccharomyces cerevisiae (strain ATCC 204508 / S288c) (Baker's yeast), this protein is Large ribosomal subunit protein eL31A.